We begin with the raw amino-acid sequence, 315 residues long: MNQLDQLKRLTTVVADTGNFLQLAQFAPQDATTNPSLILKAVQQAEYAPLLTETVARHRGLPLDQVVDQVLVRFGLEILKIVPGRVSTEVDARLSFDTAATVARAHRIINLYDDAGIGRERVLIKIASTWEGIQAAAELEREGIHCNLTLLFAFAQAVACGAAGVQLISPFVGRIYDWYKKSAGANWDEAAMAGANDPGVKSVAQIYSYYKKFGIATEVMGASFRNVGQITALAGCDLLTISPDLLAQLQASEEPISAALDAAAARDAAIDAVRYDEPGFRFALNEDAMATEKLAEGIRAFAADAAKLDKMILAL.

The Schiff-base intermediate with substrate role is filled by Lys-125.

Belongs to the transaldolase family. Type 1 subfamily. Homodimer.

It localises to the cytoplasm. The enzyme catalyses D-sedoheptulose 7-phosphate + D-glyceraldehyde 3-phosphate = D-erythrose 4-phosphate + beta-D-fructose 6-phosphate. Its pathway is carbohydrate degradation; pentose phosphate pathway; D-glyceraldehyde 3-phosphate and beta-D-fructose 6-phosphate from D-ribose 5-phosphate and D-xylulose 5-phosphate (non-oxidative stage): step 2/3. Functionally, transaldolase is important for the balance of metabolites in the pentose-phosphate pathway. This Leptothrix cholodnii (strain ATCC 51168 / LMG 8142 / SP-6) (Leptothrix discophora (strain SP-6)) protein is Transaldolase.